We begin with the raw amino-acid sequence, 46 residues long: Short transmembrane mitochondrial protein 1 (46 aa).

Residues 7–23 (GFTLGNVVGMYLAQNYE) traverse the membrane as a helical segment.

The protein belongs to the STMP1 family. Widely expressed. Expressed more abundantly in brain compared with other tissues such as heart, muscle and liver.

The protein resides in the mitochondrion inner membrane. It localises to the mitochondrion outer membrane. It is found in the mitochondrion intermembrane space. In terms of biological role, microprotein involved in mitochondrial respiratory chain complex III (ubiquinol-cytochrome c oxidoreductase) and complex IV (mitochondrial cytochrome c oxidase complex) assembly. Required for the formation of mitochondrial supercomplexes (SCs). Also required for the activation of the NLRP3 inflammasome. This Danio rerio (Zebrafish) protein is Short transmembrane mitochondrial protein 1.